The following is a 228-amino-acid chain: Putative L-ribulose-5-phosphate 4-epimerase UlaF (228 aa).

Substrate contacts are provided by residues 26-27 (GN), 43-44 (SG), and 72-73 (SS). Residues D74, H93, and H95 each contribute to the Zn(2+) site. D118 functions as the Proton donor/acceptor in the catalytic mechanism. Position 167 (H167) interacts with Zn(2+). Y225 acts as the Proton donor/acceptor in catalysis.

The protein belongs to the aldolase class II family. AraD/FucA subfamily. Zn(2+) serves as cofactor.

The catalysed reaction is L-ribulose 5-phosphate = D-xylulose 5-phosphate. Its pathway is cofactor degradation; L-ascorbate degradation; D-xylulose 5-phosphate from L-ascorbate: step 4/4. Catalyzes the isomerization of L-ribulose 5-phosphate to D-xylulose 5-phosphate. Is involved in the anaerobic L-ascorbate utilization. This Shigella boydii serotype 4 (strain Sb227) protein is Putative L-ribulose-5-phosphate 4-epimerase UlaF.